Consider the following 350-residue polypeptide: MAQAGSADPGVGGHWAAGPRCAPWRWALALLWLATAAGGPSRRQWPVPYKRFSFRPEPDPYCQAKYTFCPTGSPIPVMKGDDVIEVFRLQTPVWEFKYGNLLGHLKIMHDAIGFKSTLTGKNYTMEWYELFQLGNCTFPHLRPEMNAPFWCNQGAACFFEGIDDIHWKENGTLVLVATISGNTFNQMAKWVKRDNETGIYYETWTVQASPTKGAETWFESYDCSKFVLRTYKKLAELGAEFKKIETNYTRIFLYSGEPTYLGNETSIFGPTGNKTLALAIKRFYYPFKPHLSTKEFLLSILQIFDAVIIHREFYLFYNFEYWFLPMKFPFIKITYEEIPLPKRNETLSGL.

The Cytoplasmic segment spans residues methionine 1 to arginine 25. Residues tryptophan 26–arginine 42 traverse the membrane as a helical; Signal-anchor for type II membrane protein segment. Residues arginine 43 to leucine 350 lie on the Lumenal side of the membrane. 2 disulfide bridges follow: cysteine 62-cysteine 151 and cysteine 69-cysteine 157. Catalysis depends on histidine 109, which acts as the Proton acceptor. Residues asparagine 122, asparagine 135, asparagine 170, and asparagine 195 are each glycosylated (N-linked (GlcNAc...) asparagine). Catalysis depends on cysteine 223, which acts as the Nucleophile; Acyl-thioester intermediate. N-linked (GlcNAc...) asparagine glycosylation is found at asparagine 247, asparagine 263, and asparagine 273. The interval phenylalanine 296–tyrosine 335 is membrane-anchoring. Asparagine 344 is a glycosylation site (N-linked (GlcNAc...) asparagine).

The protein belongs to the CLN5 family. As to quaternary structure, multimer. Interacts with SORT1, RAB5A and RAB7A. Interacts with PPT1, TPP1, CLN3, CLN6, CLN8, ATP5F1A and ATP5F1B. N-glycosylated with both high mannose and complex type sugars. Glycosylation is important for proper folding and trafficking to the lysosomes. In terms of processing, the type II membrane signal anchor is proteolytically cleaved to produce a mature form that is transported to the lysosomes (Bis(monoacylglycero)phosphate synthase CLN5, secreted form). Post-translationally, can undergo proteolytic cleavage at the C-terminus, probably by a cysteine protease and may involve the removal of approximately 10-15 residues from the C-terminal end.

The protein localises to the lysosome. The protein resides in the membrane. It catalyses the reaction S-hexadecanoyl-L-cysteinyl-[protein] + H2O = L-cysteinyl-[protein] + hexadecanoate + H(+). It carries out the reaction 2 1-acyl-sn-glycero-3-phospho-(1'-sn-glycerol) = 1-acyl-sn-glycero-3-phospho-(3'-acyl-sn-1'-glycerol) + sn-glycero-3-phospho-(1'-sn-glycerol). The enzyme catalyses 2 1-(9Z-octadecenoyl)-sn-glycero-3-phospho-(1'-sn-glycerol) = 1-(9Z-octadecenoyl)-sn-glycero-3-phospho-(3'-(9Z-octadecenoyl)-1'-sn-glycerol) + sn-glycero-3-phospho-(1'-sn-glycerol). The catalysed reaction is 2 1-octadecanoyl-sn-glycero-3-phospho-(1'-sn-glycerol) = 1-octadecanoyl-sn-glycero-3-phospho-(3'-octadecanoyl-1'-sn-glycerol) + sn-glycero-3-phospho-(1'-sn-glycerol). It catalyses the reaction 2 1-hexadecanoyl-sn-glycero-3-phospho-(1'-sn-glycerol) = 1-hexadecanoyl-sn-glycero-3-phospho-(3'-hexadecanoyl-1'-sn-glycerol) + sn-glycero-3-phospho-(1'-sn-glycerol). It carries out the reaction 2 1-tetradecanoyl-sn-glycero-3-phospho-(1'-sn-glycerol) = 1-tetradecanoyl-sn-glycero-3-phospho-(3'-tetradecanoyl-1'-sn-glycerol) + sn-glycero-3-phospho-(1'-sn-glycerol). Catalyzes the synthesis of bis(monoacylglycero)phosphate (BMP) via transacylation of 2 molecules of lysophosphatidylglycerol (LPG). BMP also known as lysobisphosphatidic acid plays a key role in the formation of intraluminal vesicles and in maintaining intracellular cholesterol homeostasis. Can use only LPG as the exclusive lysophospholipid acyl donor for base exchange and displays BMP synthase activity towards various LPGs (LPG 14:0, LPG 16:0, LPG 18:0, LPG 18:1) with a higher preference for longer chain lengths. Plays a role in influencing the retrograde trafficking of lysosomal sorting receptors SORT1 and IGF2R from the endosomes to the trans-Golgi network by controlling the recruitment of retromer complex to the endosomal membrane. Regulates the localization and activation of RAB7A which is required to recruit the retromer complex to the endosomal membrane. Functionally, exhibits palmitoyl protein thioesterase (S-depalmitoylation) activity in vitro and most likely plays a role in protein S-depalmitoylation. In Canis lupus familiaris (Dog), this protein is Bis(monoacylglycero)phosphate synthase CLN5 (CLN5).